The following is a 395-amino-acid chain: Acid ceramidase (395 aa).

The signal sequence occupies residues Met1–Ala21. Cys31 and Cys340 are oxidised to a cystine. Cys143 functions as the Nucleophile in the catalytic mechanism. N-linked (GlcNAc...) asparagine glycans are attached at residues Asn195, Asn259, Asn286, and Asn342. Cys388 and Cys392 are disulfide-bonded.

It belongs to the acid ceramidase family. In terms of assembly, heterodimer; disulfide-linked. The heterodimer is composed of the disulfide-linked alpha and beta chains produced by autocatalytic cleavage of the precursor. Post-translationally, N-glycosylated. In terms of processing, proteolytically cleaved into two chains alpha and beta that remain associated via a disulfide bond. Cleavage gives rise to a conformation change that activates the enzyme. The same catalytic Cys residue mediates the autoproteolytic cleavage and subsequent hydrolysis of lipid substrates. The beta chain may undergo an additional C-terminal processing.

Its subcellular location is the lysosome. It is found in the secreted. The catalysed reaction is an N-acylsphing-4-enine + H2O = sphing-4-enine + a fatty acid. The enzyme catalyses N-dodecanoylsphing-4-enine + H2O = dodecanoate + sphing-4-enine. It catalyses the reaction N-tetradecanoylsphing-4-enine + H2O = tetradecanoate + sphing-4-enine. It carries out the reaction N-hexadecanoylsphing-4-enine + H2O = sphing-4-enine + hexadecanoate. The catalysed reaction is N-octadecanoylsphing-4-enine + H2O = sphing-4-enine + octadecanoate. The enzyme catalyses N-dodecanoyl-(4R)-hydroxysphinganine + H2O = (4R)-hydroxysphinganine + dodecanoate. It catalyses the reaction N-(dodecanoyl)-sphinganine + H2O = dodecanoate + sphinganine. It carries out the reaction N-(acetyl)-sphing-4-enine + H2O = sphing-4-enine + acetate. The catalysed reaction is N-(hexanoyl)sphing-4-enine + H2O = hexanoate + sphing-4-enine. The enzyme catalyses N-octanoylsphing-4-enine + H2O = octanoate + sphing-4-enine. It catalyses the reaction N-(9Z-octadecenoyl)-sphing-4-enine + H2O = sphing-4-enine + (9Z)-octadecenoate. It carries out the reaction N-dodecanoylethanolamine + H2O = dodecanoate + ethanolamine. Its pathway is lipid metabolism; sphingolipid metabolism. In terms of biological role, lysosomal ceramidase that hydrolyzes sphingolipid ceramides into sphingosine and free fatty acids at acidic pH. Ceramides, sphingosine, and its phosphorylated form sphingosine-1-phosphate are bioactive lipids that mediate cellular signaling pathways regulating several biological processes including cell proliferation, apoptosis and differentiation. Has a higher catalytic efficiency towards C12-ceramides versus other ceramides. Also catalyzes the reverse reaction allowing the synthesis of ceramides from fatty acids and sphingosine. For the reverse synthetic reaction, the natural sphingosine D-erythro isomer is more efficiently utilized as a substrate compared to D-erythro-dihydrosphingosine and D-erythro-phytosphingosine, while the fatty acids with chain lengths of 12 or 14 carbons are the most efficiently used. Also has an N-acylethanolamine hydrolase activity. By regulating the levels of ceramides, sphingosine and sphingosine-1-phosphate in the epidermis, mediates the calcium-induced differentiation of epidermal keratinocytes. Also indirectly regulates tumor necrosis factor/TNF-induced apoptosis. By regulating the intracellular balance between ceramides and sphingosine, in adrenocortical cells, probably also acts as a regulator of steroidogenesis. The sequence is that of Acid ceramidase from Pan troglodytes (Chimpanzee).